We begin with the raw amino-acid sequence, 654 residues long: Myrosinase-binding protein 2 (654 aa).

Jacalin-type lectin domains follow at residues 2–151, 156–291, 346–489, and 502–645; these read SEKV…HFFA, LKHF…HFAP, PNKV…YFAP, and AKKL…HAVP. Pro residues predominate over residues 314–346; that stretch reads VPAPSPAPAPSPAPAPAPAPAPAPTPAPAPAPP. A disordered region spans residues 314–355; that stretch reads VPAPSPAPAPSPAPAPAPAPAPAPTPAPAPAPPNKVEALGGN.

The protein belongs to the jacalin lectin family. In terms of tissue distribution, expressed in flowers. Detected mainly in ovules and styles of immature flowers, but also in pistils, styles, stamens, petals and embryos. Not detected in leaves.

In Arabidopsis thaliana (Mouse-ear cress), this protein is Myrosinase-binding protein 2 (MBP2).